A 1494-amino-acid chain; its full sequence is Serine/threonine-protein kinase VPS15 (1494 aa).

G2 carries the N-myristoyl glycine lipid modification. The region spanning 27–307 is the Protein kinase domain; that stretch reads LVLKEVLGRG…VFPNYFSPFL (281 aa). ATP is bound by residues 33 to 41 and K54; that span reads LGRGRFLKS. D149 (proton acceptor) is an active-site residue. HEAT repeat units lie at residues 383–421, 480–517, 524–562, 610–646, 648–685, 687–724, and 727–764; these read NSKD…LYDS, DRLQ…LVRD, KIFP…TAYG, KTIA…FFGQ, QSND…FVGQ, SVEE…SSFL, and RALL…CLGA. Disordered stretches follow at residues 859–903 and 1037–1064; these read QSVE…TVEL and SASV…SVPD. Over residues 1037 to 1047 the composition is skewed to low complexity; the sequence is SASVTSEDASS. 7 WD repeats span residues 1079–1118, 1127–1166, 1184–1226, 1231–1270, 1276–1323, 1371–1409, and 1466–1494; these read EHRS…KDIS, LEGS…RGLG, KEGA…DAWT, PEEG…PVNS, ICPI…CHQV, PRLP…RSYC, and DSVQ…KVWK.

It belongs to the protein kinase superfamily. Ser/Thr protein kinase family. Interacts with VPS34. Component of a complex made of VPS38/USL1 and PI3K main subunits such as VPS15, ATG6/VPS30 and VPS34. Autophosphorylated. Mainly expressed in anthers, pollen grains and pollen tubes, and, to a lower extent, in other tissues and organs including seedlings, roots, stems, leaves, flowers, pitils and siliques.

It localises to the cytoplasm. Its subcellular location is the golgi apparatus. It is found in the trans-Golgi network membrane. The protein localises to the endosome membrane. The enzyme catalyses L-seryl-[protein] + ATP = O-phospho-L-seryl-[protein] + ADP + H(+). The catalysed reaction is L-threonyl-[protein] + ATP = O-phospho-L-threonyl-[protein] + ADP + H(+). Serine/threonine-protein kinase required for cytoplasm to vacuole transport (Cvt) and autophagy as a part of the autophagy-specific VPS34 PI3-kinase complex I. Required for pollen development and germination, probably via the modulation of phosphatidylinositol 3-phosphate (PI3P) formation and vacuolar organization. The sequence is that of Serine/threonine-protein kinase VPS15 from Arabidopsis thaliana (Mouse-ear cress).